Consider the following 540-residue polypeptide: Chaperonin GroEL 3 (540 aa).

ATP is bound by residues 30–33 (TLGP), lysine 51, 87–91 (DGTTT), glycine 415, 480–482 (NAA), and aspartate 496.

Belongs to the chaperonin (HSP60) family. In terms of assembly, forms a cylinder of 14 subunits composed of two heptameric rings stacked back-to-back. Interacts with the co-chaperonin GroES.

Its subcellular location is the cytoplasm. It catalyses the reaction ATP + H2O + a folded polypeptide = ADP + phosphate + an unfolded polypeptide.. In terms of biological role, together with its co-chaperonin GroES, plays an essential role in assisting protein folding. The GroEL-GroES system forms a nano-cage that allows encapsulation of the non-native substrate proteins and provides a physical environment optimized to promote and accelerate protein folding. In Bradyrhizobium sp. (strain BTAi1 / ATCC BAA-1182), this protein is Chaperonin GroEL 3.